A 113-amino-acid chain; its full sequence is uncharacterized protein (113 aa).

The next 3 helical transmembrane spans lie at 9 to 31, 36 to 58, and 71 to 90; these read IFPS…SVIY, VLTI…YKFQ, and IMAL…VVAV.

The protein localises to the cell membrane. This is an uncharacterized protein from Archaeoglobus fulgidus (strain ATCC 49558 / DSM 4304 / JCM 9628 / NBRC 100126 / VC-16).